The sequence spans 761 residues: Probable beta-galactosidase 2 (761 aa).

The N-terminal stretch at 1–23 (MGTIKNNFQLLWLILLIVVLVNG) is a signal peptide. 2 N-linked (GlcNAc...) asparagine glycosylation sites follow: Asn-39 and Asn-110. Glu-195 serves as the catalytic Proton donor. N-linked (GlcNAc...) asparagine glycosylation is present at Asn-206. Glu-267 serves as the catalytic Nucleophile. Asn-385, Asn-405, Asn-438, Asn-501, Asn-552, Asn-553, Asn-577, Asn-592, Asn-642, Asn-690, and Asn-696 each carry an N-linked (GlcNAc...) asparagine glycan.

The protein belongs to the glycosyl hydrolase 35 family.

It carries out the reaction Hydrolysis of terminal non-reducing beta-D-galactose residues in beta-D-galactosides.. In terms of biological role, cleaves beta-linked terminal galactosyl residues from gangliosides, glycoproteins, and glycosaminoglycans. This is Probable beta-galactosidase 2 (glb2) from Dictyostelium discoideum (Social amoeba).